The chain runs to 239 residues: Small ribosomal subunit protein eS1 (239 aa).

The tract at residues 1-24 (MAIQPPGSYPQGNKKGKAKKKSGQ) is disordered.

The protein belongs to the eukaryotic ribosomal protein eS1 family. As to quaternary structure, component of the small ribosomal subunit. Mature ribosomes consist of a small (40S) and a large (60S) subunit. The 40S subunit contains about 33 different proteins and 1 molecule of RNA (18S). The 60S subunit contains about 49 different proteins and 3 molecules of RNA (25S, 5.8S and 5S).

The protein localises to the cytoplasm. This chain is Small ribosomal subunit protein eS1, found in Encephalitozoon cuniculi (strain GB-M1) (Microsporidian parasite).